We begin with the raw amino-acid sequence, 173 residues long: Co-chaperone protein HscB (173 aa).

The 73-residue stretch at 2–74 (DYFTLFGLPV…LKRAEYMLSL (73 aa)) folds into the J domain.

The protein belongs to the HscB family. As to quaternary structure, interacts with HscA and stimulates its ATPase activity. Interacts with IscU.

Co-chaperone involved in the maturation of iron-sulfur cluster-containing proteins. Seems to help targeting proteins to be folded toward HscA. The protein is Co-chaperone protein HscB of Serratia proteamaculans (strain 568).